We begin with the raw amino-acid sequence, 163 residues long: MSLGLLKFQAVGEEDEEDEEGESLDSVKALTAKLQLQTRRPSYLEWTAQVQSQAWRRAQAKPGPGGPGDICGFDSMDSALEWLRRELREMQAQDRQLAGQLLRLRAQLHRLKMDQACHLHQELLDEAELELELEPGAGLALAPLLRHLGLTRMNISARRFTLC.

Residues 73–132 (FDSMDSALEWLRRELREMQAQDRQLAGQLLRLRAQLHRLKMDQACHLHQELLDEAELELE) adopt a coiled-coil conformation.

The protein belongs to the FAM167 (SEC) family.

In Homo sapiens (Human), this protein is Protein FAM167B (FAM167B).